The primary structure comprises 290 residues: Protein SET (290 aa).

Positions methionine 1–isoleucine 45 are disordered. A N,N,N-trimethylalanine modification is found at alanine 2. Residue serine 7 is modified to Phosphoserine. Position 11 is an N6-acetyllysine (proline 11). 3 positions are modified to phosphoserine: lysine 15, proline 24, and serine 28. Positions alanine 31 to glutamine 78 are dimerization. The segment covering lysine 35–isoleucine 45 has biased composition (basic and acidic residues). Serine 63 bears the Phosphoserine mark. Lysine 68 carries the post-translational modification N6-acetyllysine. An earmuff domain region spans residues proline 79–isoleucine 225. Position 146 is a phosphotyrosine (tyrosine 146). An N6-acetyllysine modification is found at lysine 150. Lysine 154 participates in a covalent cross-link: Glycyl lysine isopeptide (Lys-Gly) (interchain with G-Cter in ubiquitin). Disordered regions lie at residues leucine 158 to threonine 207 and proline 236 to aspartate 290. Basic and acidic residues predominate over residues threonine 169 to lysine 181. N6-acetyllysine is present on lysine 172. Over residues aspartate 237–aspartate 290 the composition is skewed to acidic residues.

Belongs to the nucleosome assembly protein (NAP) family. In terms of assembly, headphone-shaped homodimer. Isoforms 1 and 2 interact directly with each other and with ANP32A within the tripartite INHAT (inhibitor of acetyltransferases) complex. Isoform 1 and isoform 2 interact also with histones. Isoform 2 is a component of the SET complex, composed of at least ANP32A, APEX1, HMGB2, NME1, SET and TREX1, but not NME2 or TREX2. Within this complex, directly interacts with ANP32A, NME1, HMGB2 and TREX1; the interaction with ANP32A is enhanced after cleavage. Interacts with APBB1, CHTOP, SETBP1, SGO1. As to quaternary structure, (Microbial infection) Interacts with herpes simplex virus 1 VP22. Post-translationally, isoform 2 is phosphorylated on Ser-15 and Ser-24. In terms of processing, isoform 2 is acetylated on Lys-11. Some glutamate residues are glycylated by TTLL8. This modification occurs exclusively on glutamate residues and results in a glycine chain on the gamma-carboxyl group. Post-translationally, N-terminus of isoform 1 is methylated by METTL11A/NTM1. Mainly trimethylated. In terms of processing, cleaved after Lys-176 by GZMA. The cleavage inhibits its nucleosome assembly activity and disrupts the inhibition on NME1. In terms of tissue distribution, widely expressed. Low levels in quiescent cells during serum starvation, contact inhibition or differentiation. Highly expressed in Wilms' tumor.

The protein localises to the cytoplasm. Its subcellular location is the cytosol. It localises to the endoplasmic reticulum. The protein resides in the nucleus. It is found in the nucleoplasm. Its function is as follows. Multitasking protein, involved in apoptosis, transcription, nucleosome assembly and histone chaperoning. Isoform 2 anti-apoptotic activity is mediated by inhibition of the GZMA-activated DNase, NME1. In the course of cytotoxic T-lymphocyte (CTL)-induced apoptosis, GZMA cleaves SET, disrupting its binding to NME1 and releasing NME1 inhibition. Isoform 1 and isoform 2 are potent inhibitors of protein phosphatase 2A. Isoform 1 and isoform 2 inhibit EP300/CREBBP and PCAF-mediated acetylation of histones (HAT) and nucleosomes, most probably by masking the accessibility of lysines of histones to the acetylases. The predominant target for inhibition is histone H4. HAT inhibition leads to silencing of HAT-dependent transcription and prevents active demethylation of DNA. Both isoforms stimulate DNA replication of the adenovirus genome complexed with viral core proteins; however, isoform 2 specific activity is higher. This is Protein SET (SET) from Homo sapiens (Human).